We begin with the raw amino-acid sequence, 97 residues long: Large ribosomal subunit protein uL23 (97 aa).

This sequence belongs to the universal ribosomal protein uL23 family. Part of the 50S ribosomal subunit. Contacts protein L29, and trigger factor when it is bound to the ribosome.

Functionally, one of the early assembly proteins it binds 23S rRNA. One of the proteins that surrounds the polypeptide exit tunnel on the outside of the ribosome. Forms the main docking site for trigger factor binding to the ribosome. The protein is Large ribosomal subunit protein uL23 of Acidithiobacillus ferrooxidans (strain ATCC 23270 / DSM 14882 / CIP 104768 / NCIMB 8455) (Ferrobacillus ferrooxidans (strain ATCC 23270)).